We begin with the raw amino-acid sequence, 498 residues long: Phosphatidylserine synthase (498 aa).

A disordered region spans residues 1-65 (MKKRTNSRGT…GSVSSAGARR (65 aa)). Residues 1–92 (MKKRTNSRGT…VDDISLDFFY (92 aa)) lie on the Cytoplasmic side of the membrane. Residues 7-25 (SRGTPTSSGDALLDTSFSS) show a composition bias toward polar residues. The chain crosses the membrane as a helical span at residues 93 to 113 (KPHTITLLAVSVLAVMYFAFV). The Lumenal segment spans residues 114–122 (RNEANVDEN). A helical transmembrane segment spans residues 123-143 (LWAGLLCIVFFFLIVSVIAFP). Topologically, residues 144–153 (NGPFTRPHPA) are cytoplasmic. A helical membrane pass occupies residues 154 to 174 (VWRILFGCSVLYLLTLQFLMF). Over 175–239 (QNYPTIRSIF…AFKAILIRHM (65 aa)) the chain is Lumenal. N-linked (GlcNAc...) asparagine glycosylation occurs at N205. The helical transmembrane segment at 240–260 (GILWAISVMWEITEITFAHLL) threads the bilayer. The Cytoplasmic portion of the chain corresponds to 261–266 (PNFIEC). The helical transmembrane segment at 267-287 (WWDALILDVIICNGLGIWMGL) threads the bilayer. Over 288 to 339 (KICQILEMREYKWASIKDISTTTGKIKRAMLQFTPESWSAIRWLDPKSTAMR) the chain is Lumenal. The helical transmembrane segment at 340–360 (FAAVIQLVIFWQVTELNTFFL) threads the bilayer. At 361-367 (KHIFEMP) the chain is on the cytoplasmic side. Residues 368–388 (PDHFIVIGRLIFIGLFVAPSV) form a helical membrane-spanning segment. At 389 to 402 (RQYYVYVTDTRCKR) the chain is on the lumenal side. A helical transmembrane segment spans residues 403–423 (VGTQCWVYGAIMVSEAILCIK). Residues 424–436 (NGKELFERTQAIN) are Cytoplasmic-facing. The helical transmembrane segment at 437–457 (IVLWLTVQVIISVAFVYLAVY) threads the bilayer. The Lumenal portion of the chain corresponds to 458 to 498 (WQQRQLKKVSSTPAKTKETIPASSSSPSKGKLSPQKEKKLK). The tract at residues 465 to 498 (KVSSTPAKTKETIPASSSSPSKGKLSPQKEKKLK) is disordered. The span at 478–490 (PASSSSPSKGKLS) shows a compositional bias: low complexity.

This sequence belongs to the phosphatidyl serine synthase family.

It localises to the endoplasmic reticulum membrane. The enzyme catalyses a 1,2-diacyl-sn-glycero-3-phosphoethanolamine + L-serine = a 1,2-diacyl-sn-glycero-3-phospho-L-serine + ethanolamine. It participates in phospholipid metabolism; phosphatidylserine biosynthesis. In terms of biological role, catalyzes a base-exchange reaction in which the polar head group of phosphatidylethanolamine (PE) is replaced by L-serine. The chain is Phosphatidylserine synthase from Drosophila melanogaster (Fruit fly).